We begin with the raw amino-acid sequence, 81 residues long: ATP synthase subunit c (81 aa).

The next 2 helical transmembrane spans lie at 5-25 and 57-77; these read VAAA…IGPG and LAFM…LLFA.

This sequence belongs to the ATPase C chain family. In terms of assembly, F-type ATPases have 2 components, F(1) - the catalytic core - and F(0) - the membrane proton channel. F(1) has five subunits: alpha(3), beta(3), gamma(1), delta(1), epsilon(1). F(0) has four main subunits: a(1), b(1), b'(1) and c(10-14). The alpha and beta chains form an alternating ring which encloses part of the gamma chain. F(1) is attached to F(0) by a central stalk formed by the gamma and epsilon chains, while a peripheral stalk is formed by the delta, b and b' chains.

The protein resides in the cellular thylakoid membrane. In terms of biological role, f(1)F(0) ATP synthase produces ATP from ADP in the presence of a proton or sodium gradient. F-type ATPases consist of two structural domains, F(1) containing the extramembraneous catalytic core and F(0) containing the membrane proton channel, linked together by a central stalk and a peripheral stalk. During catalysis, ATP synthesis in the catalytic domain of F(1) is coupled via a rotary mechanism of the central stalk subunits to proton translocation. Its function is as follows. Key component of the F(0) channel; it plays a direct role in translocation across the membrane. A homomeric c-ring of between 10-14 subunits forms the central stalk rotor element with the F(1) delta and epsilon subunits. The polypeptide is ATP synthase subunit c (Microcystis aeruginosa (strain NIES-843 / IAM M-2473)).